A 714-amino-acid chain; its full sequence is Inducible lysine decarboxylase (714 aa).

An N6-(pyridoxal phosphate)lysine modification is found at Lys-367.

Belongs to the Orn/Lys/Arg decarboxylase class-I family. As to quaternary structure, homodecamer. Interacts with RavA. Pyridoxal 5'-phosphate is required as a cofactor.

The protein resides in the cytoplasm. It catalyses the reaction L-lysine + H(+) = cadaverine + CO2. The polypeptide is Inducible lysine decarboxylase (cadA) (Salmonella typhi).